Reading from the N-terminus, the 59-residue chain is Preprotein translocase subunit SecG (59 aa).

The Cytoplasmic portion of the chain corresponds to 1 to 33 (MARRESSGGSGGLMSSAGLMRYFEAEESAIKID). The chain crosses the membrane as a helical span at residues 34 to 55 (PKTVIIAAVASGAFIWILNFTY). Residues 56-59 (GRFW) are Extracellular-facing.

It belongs to the SEC61-beta family. As to quaternary structure, component of the protein translocase complex. Heterotrimer consisting of alpha (SecY), beta (SecG) and gamma (SecE) subunits. Can form oligomers of the heterotrimer.

Its subcellular location is the cell membrane. Its function is as follows. Involved in protein export. The function of the beta subunit is unknown, but it may be involved in stabilization of the trimeric complex. The polypeptide is Preprotein translocase subunit SecG (Methanocella arvoryzae (strain DSM 22066 / NBRC 105507 / MRE50)).